A 368-amino-acid chain; its full sequence is Endophilin-A2 (368 aa).

A membrane-binding amphipathic helix region spans residues 1 to 21 (MSVAGLKKQFYKASQLVSEKV). A BAR domain is found at 18 to 249 (SEKVGGAEGT…LKRRMREASS (232 aa)). Residues 60 to 87 (PNPASRAKLTMLNTVSKIRGQVKNPGYP) form a required for dimerization upon membrane association region. Residues 181 to 250 (EELRQAMEKF…KRRMREASSR (70 aa)) adopt a coiled-coil conformation. An interaction with ARC region spans residues 218-254 (LVDAQLDYHRQAVQILDELADKLKRRMREASSRPKRE). The disordered stretch occupies residues 243-308 (RMREASSRPK…PSRSMPPLDQ (66 aa)). The segment covering 245 to 263 (REASSRPKREYKPKPRELL) has biased composition (basic and acidic residues). Phosphoserine is present on residues serine 288 and serine 292. A Phosphothreonine modification is found at threonine 298. The SH3 domain occupies 306-365 (LDQPSCKALYDFEPENDGELGFHEGDIITLTNQIDENWYEGMLDGQSGFFPLSYVEVLVP). Tyrosine 315 carries the post-translational modification Phosphotyrosine.

The protein belongs to the endophilin family. In terms of assembly, interacts with ARC, SYNJ1 and DNM1. Interacts with PDCD6IP. Interacts with BIN2.

The protein localises to the cytoplasm. Its subcellular location is the early endosome membrane. The protein resides in the cell projection. It is found in the podosome. Implicated in endocytosis. May recruit other proteins to membranes with high curvature. This Bos taurus (Bovine) protein is Endophilin-A2.